A 121-amino-acid chain; its full sequence is Apoptin (121 aa).

2 disordered regions span residues M1–P28 and L57–L121. Residues R58–F70 show a composition bias toward polar residues. The segment covering R88–E102 has biased composition (basic and acidic residues).

This sequence belongs to the gyrovirus apoptin family.

The protein localises to the host nucleus. Its function is as follows. May act as transcriptional regulator. Induces apoptosis in infected cells. Element of infectious replication cycle. This chain is Apoptin (VP3), found in Gallus gallus (Chicken).